Consider the following 247-residue polypeptide: MLKQRFVLDTTALTDLQTREVMGYTSLCEGMKTILDLIAEARLHFGISCYVPYPSVYKEMYEFASRNGCDREVVAKIDTWLVKKSPDRYRVDVTSQIFHEYVSYMRERINRGMGVAEDAIWEAATECLFMENPQNKKKEYREEVEREVIGGIIGKFRNKYRAALRYGILDSAPDIDVLILAKELDAAVIASDYGIEKWAEQLGVRFVPANTFPMMIKEYLRHGPEVVKEQEDEDRKRIDYSDDADFI.

This sequence belongs to the HARP family.

It carries out the reaction Endonucleolytic cleavage of RNA, removing 5'-extranucleotides from tRNA precursor.. Functionally, RNA-free RNase P that catalyzes the removal of the 5'-leader sequence from pre-tRNA to produce the mature 5'-terminus. The polypeptide is RNA-free ribonuclease P (Methanosarcina mazei (strain ATCC BAA-159 / DSM 3647 / Goe1 / Go1 / JCM 11833 / OCM 88) (Methanosarcina frisia)).